Consider the following 366-residue polypeptide: tRNA/tmRNA (uracil-C(5))-methyltransferase (366 aa).

5 residues coordinate S-adenosyl-L-methionine: Gln190, Tyr218, Asn223, Glu239, and Asp299. Catalysis depends on Cys324, which acts as the Nucleophile. The active-site Proton acceptor is Glu358.

It belongs to the class I-like SAM-binding methyltransferase superfamily. RNA M5U methyltransferase family. TrmA subfamily.

It carries out the reaction uridine(54) in tRNA + S-adenosyl-L-methionine = 5-methyluridine(54) in tRNA + S-adenosyl-L-homocysteine + H(+). It catalyses the reaction uridine(341) in tmRNA + S-adenosyl-L-methionine = 5-methyluridine(341) in tmRNA + S-adenosyl-L-homocysteine + H(+). Functionally, dual-specificity methyltransferase that catalyzes the formation of 5-methyluridine at position 54 (m5U54) in all tRNAs, and that of position 341 (m5U341) in tmRNA (transfer-mRNA). This chain is tRNA/tmRNA (uracil-C(5))-methyltransferase, found in Escherichia coli O7:K1 (strain IAI39 / ExPEC).